A 284-amino-acid polypeptide reads, in one-letter code: Pantothenate synthetase (284 aa).

Residue 30 to 37 (MGNLHQGH) participates in ATP binding. Residue H37 is the Proton donor of the active site. Q61 is a binding site for (R)-pantoate. Q61 provides a ligand contact to beta-alanine. 149 to 152 (GQKD) contacts ATP. Q155 serves as a coordination point for (R)-pantoate. Residues V178 and 186 to 189 (LSSR) contribute to the ATP site.

The protein belongs to the pantothenate synthetase family. Homodimer.

It localises to the cytoplasm. The catalysed reaction is (R)-pantoate + beta-alanine + ATP = (R)-pantothenate + AMP + diphosphate + H(+). It functions in the pathway cofactor biosynthesis; (R)-pantothenate biosynthesis; (R)-pantothenate from (R)-pantoate and beta-alanine: step 1/1. Its function is as follows. Catalyzes the condensation of pantoate with beta-alanine in an ATP-dependent reaction via a pantoyl-adenylate intermediate. The sequence is that of Pantothenate synthetase from Aeromonas salmonicida (strain A449).